The sequence spans 692 residues: Methionine--tRNA ligase (692 aa).

The short motif at 12 to 22 is the 'HIGH' region element; sequence PYANGSFHIGH. The Zn(2+) site is built by C143, C146, C156, and C159. A 'KMSKS' region motif is present at residues 341–345; that stretch reads KMSKS. K344 is an ATP binding site. In terms of domain architecture, tRNA-binding spans 586 to 692; the sequence is DFAKIDLRIA…PGAQPGMRVR (107 aa).

It belongs to the class-I aminoacyl-tRNA synthetase family. MetG type 1 subfamily. As to quaternary structure, homodimer. The cofactor is Zn(2+).

It localises to the cytoplasm. It catalyses the reaction tRNA(Met) + L-methionine + ATP = L-methionyl-tRNA(Met) + AMP + diphosphate. Functionally, is required not only for elongation of protein synthesis but also for the initiation of all mRNA translation through initiator tRNA(fMet) aminoacylation. The chain is Methionine--tRNA ligase from Bordetella bronchiseptica (strain ATCC BAA-588 / NCTC 13252 / RB50) (Alcaligenes bronchisepticus).